Consider the following 647-residue polypeptide: MTTNPDIVKQTKNEIHQVTSRVQEKLDSKSTNAVEQNNNSSQASVTKDNKKKAAKRAKKKAAKKKKQSAAASASSTPVEEAQHAQEEQQEQTILQEPGFTQTIVEKDADQVDEPLEPIASSALGTVEPPTDNKPSASTSTAVPTTEARNTSITEPANSPSSSSSSASTKSTATTQSADYVVAEHFAPQRNDEQLGNSPASITSKPATTSAAQPSSKVEENMAKATSQPITTAEKEIPELKPIEPEAIMISKEINTTHDQAAATTTAAVASASTTATAESHAVADGIMNDNVLESIGENVQQETVFEDASDIPHADVIPHTTTVTVEEESPIALGQGGVTHEATTSARASASGIPGAFEEVQQTVQEDLPHPTAETVEIARFAEQPVRAQQPEQYESSVVQEATETVTDVGKGVSSTVKNEVNVPSTIPTESENPVAVGGTTAEHPVQEAVTAPTETAHDFSKETTTASKRVSKHDKASAEKHKVARKPSSTGQEPTTPSTPAKSAQSSKHARRPSKQASAPSSPGTTSAAVPGGKKSAIEAAAPIPTSADTVESKHAAGSGSATTIPSPGSATTKPTPGSATTKPTPVSATEEHAAGTTKPAPAAGATATAENETADGKAQTATDGEAAPKKSWFKRMKKSFGKLFH.

2 disordered regions span residues 1-241 and 387-647; these read MTTN…ELKP and RAQQ…KLFH. Over residues 29–46 the composition is skewed to polar residues; that stretch reads KSTNAVEQNNNSSQASVT. Over residues 49–67 the composition is skewed to basic residues; it reads NKKKAAKRAKKKAAKKKKQ. Residues 92 to 103 are compositionally biased toward polar residues; sequence TILQEPGFTQTI. Low complexity predominate over residues 134 to 145; sequence PSASTSTAVPTT. Over residues 146 to 155 the composition is skewed to polar residues; sequence EARNTSITEP. The segment covering 156–177 has biased composition (low complexity); sequence ANSPSSSSSSASTKSTATTQSA. 2 positions are modified to phosphoserine: S162 and S165. T168 is modified (phosphothreonine). Polar residues predominate over residues 193 to 215; the sequence is QLGNSPASITSKPATTSAAQPSS. Residues S197 and S200 each carry the phosphoserine modification. Residues 232-241 show a composition bias toward basic and acidic residues; the sequence is AEKEIPELKP. Polar residues-rich tracts occupy residues 390–406, 413–432, and 488–508; these read QPEQ…TETV, VSST…TESE, and PSST…AQSS. S396 is modified (phosphoserine). A phosphoserine mark is found at S489 and S490. T491 is modified (phosphothreonine). Residues S515, S519, and S523 each carry the phosphoserine modification. Residues 518–530 are compositionally biased toward low complexity; that stretch reads ASAPSSPGTTSAA. The segment covering 561–589 has biased composition (polar residues); it reads GSATTIPSPGSATTKPTPGSATTKPTPVS. Residues 596–613 show a composition bias toward low complexity; that stretch reads AGTTKPAPAAGATATAEN. Basic residues predominate over residues 633-647; sequence SWFKRMKKSFGKLFH.

Has a role in meiosis and sporulation. The protein is Meiotically up-regulated protein C8C9.04 of Schizosaccharomyces pombe (strain 972 / ATCC 24843) (Fission yeast).